Consider the following 349-residue polypeptide: NADH-ubiquinone oxidoreductase chain 2 (349 aa).

Transmembrane regions (helical) follow at residues 3 to 23, 25 to 45, 66 to 86, 98 to 118, 149 to 171, 178 to 197, 202 to 219, 240 to 260, 274 to 294, and 319 to 339; these read PYVLTILLSSLGLGTILTFAS, HWLLAWMGLEINTLAIIPIMA, AAAMILFASTTNAWLVGEWEI, VMLALALKLGLAPVHFWLPEV, INSSLLIAMGLLSTLVGGWGGLN, ILAYSSIAHLGWMVLILQYA, LLSLFLYIIMTSSAFLTL, LAALTALVLLSLGGLPPLSGF, GLPLSATLAAMTALLSLYFYL, and FTLITLPLSIITILALGLLPL.

Belongs to the complex I subunit 2 family.

It localises to the mitochondrion inner membrane. It catalyses the reaction a ubiquinone + NADH + 5 H(+)(in) = a ubiquinol + NAD(+) + 4 H(+)(out). Functionally, core subunit of the mitochondrial membrane respiratory chain NADH dehydrogenase (Complex I) that is believed to belong to the minimal assembly required for catalysis. Complex I functions in the transfer of electrons from NADH to the respiratory chain. The immediate electron acceptor for the enzyme is believed to be ubiquinone. The protein is NADH-ubiquinone oxidoreductase chain 2 (MT-ND2) of Salmo salar (Atlantic salmon).